The sequence spans 67 residues: Epsilon-conotoxin TxVA (67 aa).

The signal sequence occupies residues 1–19 (MRCFPVFIILLLLIASAPC). A propeptide spanning residues 20 to 50 (FDARTKTDDDVPLSSLRDNLKRTIRTRLNIR) is cleaved from the precursor. 2 positions are modified to 4-carboxyglutamate: glutamate 51 and glutamate 54. Cystine bridges form between cysteine 52/cysteine 58 and cysteine 53/cysteine 59. The residue at position 57 (tryptophan 57) is a 6'-bromotryptophan. O-linked (GalNAc...) threonine glycosylation occurs at threonine 60. The residue at position 63 (proline 63) is a 4-hydroxyproline. Positions 64–67 (LTGR) are excised as a propeptide.

In terms of processing, O-glycan consists of the disaccharide Gal-GalNAc. In terms of tissue distribution, expressed by the venom duct.

The protein resides in the secreted. Functionally, epsilon-conotoxins act at presynaptic membranes, blocking the calcium channels or G protein-coupled receptors. Causes hyperactivity upon intracranial injection into mice. Causes dorsal fins drooping in fish. This chain is Epsilon-conotoxin TxVA, found in Conus textile (Cloth-of-gold cone).